We begin with the raw amino-acid sequence, 153 residues long: Nuclear cap-binding protein subunit 2 (153 aa).

MRNA contacts are provided by residues Tyr17, Tyr40, 109-113 (RTDWD), 120-124 (RQYGR), and 130-131 (QV). In terms of domain architecture, RRM spans 37 to 115 (CTLYVGNLSF…RIIRTDWDAG (79 aa)).

This sequence belongs to the RRM NCBP2 family. Component of the nuclear cap-binding complex (CBC), a heterodimer composed of ncbp1/cbp80 and ncbp2/cbp20 that interacts with m7GpppG-capped RNA.

Its subcellular location is the nucleus. It is found in the cytoplasm. Component of the cap-binding complex (CBC), which binds co-transcriptionally to the 5' cap of pre-mRNAs and is involved in various processes such as pre-mRNA splicing, translation regulation, nonsense-mediated mRNA decay, RNA-mediated gene silencing (RNAi) by microRNAs (miRNAs) and mRNA export. The CBC complex is involved in mRNA export from the nucleus, leading to the recruitment of the mRNA export machinery to the 5' end of mRNA and to mRNA export in a 5' to 3' direction through the nuclear pore. The CBC complex is also involved in mediating U snRNA and intronless mRNAs export from the nucleus. The CBC complex is essential for a pioneer round of mRNA translation, before steady state translation when the CBC complex is replaced by cytoplasmic cap-binding protein eIF4E. The pioneer round of mRNA translation mediated by the CBC complex plays a central role in nonsense-mediated mRNA decay (NMD), NMD only taking place in mRNAs bound to the CBC complex, but not on eIF4E-bound mRNAs. The CBC complex enhances NMD in mRNAs containing at least one exon-junction complex (EJC), promoting the interaction between upf1 and upf2. The CBC complex is also involved in 'failsafe' NMD, which is independent of the EJC complex, while it does not participate in Staufen-mediated mRNA decay (SMD). During cell proliferation, the CBC complex is also involved in microRNAs (miRNAs) biogenesis via its interaction with srrt/ars2, thereby being required for miRNA-mediated RNA interference. The CBC complex also acts as a negative regulator of parn, thereby acting as an inhibitor of mRNA deadenylation. In the CBC complex, ncbp2/cbp20 recognizes and binds capped RNAs (m7GpppG-capped RNA) but requires ncbp1/cbp80 to stabilize the movement of its N-terminal loop and lock the CBC into a high affinity cap-binding state with the cap structure. The conventional cap-binding complex with NCBP2 binds both small nuclear RNA (snRNA) and messenger (mRNA) and is involved in their export from the nucleus. The sequence is that of Nuclear cap-binding protein subunit 2 (ncbp2) from Xenopus tropicalis (Western clawed frog).